Here is a 92-residue protein sequence, read N- to C-terminus: MTAAFDRYVSFKNADWEGKSQRVMERLQIHIDAAQNPFWAYFAQKRTELNQKQGLDDLRVLHNYLPTLREILEDNGDQETLAMLEDLEVTCM.

Belongs to the CowN family.

Is required to sustain N(2)-dependent growth in the presence of low levels of carbon monoxide (CO). Probably acts by protecting the N(2) fixation ability of the nitrogenase complex, which is inactivated in the presence of CO. This Rhodopseudomonas palustris (strain BisA53) protein is N(2)-fixation sustaining protein CowN.